Here is a 511-residue protein sequence, read N- to C-terminus: MEKFEGYSEKHKSRQQYFVYPLLFQEYIYAFAHDYGLNDSEPVEIVSYNNKKFSSLLVKRLIIRMYQQNFGINSVNHPNQDRLLDYKIGFYSEFYSQILSEGFAIVVEIPFSLRELPCPKQKEIPKFQNLRSIHSIFPFLEDKFLHLDYLSHIEIPYPIHLEILVQLLQYRIQDVPSLHLLRFFLNYYSNWNSFITSMKSFFLFKKENKRLFRFLYNSYVSEYEFFLLFLRKQSSCLPLASSGTFLERIHFSRKMEHFGIMYPGFFRKTLWFFMDPLMHYARYQGKAIFASKGTLFFNKKWKWYLIHLWQYFFSFWTQPRRIHLNQLANSCFDFMGYLSSVPKSPLLVRNQMLENSFLIDTRMQKLDTIVPVTALIGYLSKAQFCTGSGHPISKPIWTDLSDWDILDRFGRICRNLFHYHSGSSKKQTLYRLKYILRLSCARTLARKHKSTVRTFMQRLGSAFLEEFFTEEELVFSLMFTKTTLFSFRGSHSERIWYFDIIRINDLVKPLN.

This sequence belongs to the intron maturase 2 family. MatK subfamily.

Its subcellular location is the plastid. The protein localises to the chloroplast. In terms of biological role, usually encoded in the trnK tRNA gene intron. Probably assists in splicing its own and other chloroplast group II introns. The chain is Maturase K from Phleum pratense (Common timothy).